Reading from the N-terminus, the 115-residue chain is Holo-[acyl-carrier-protein] synthase (115 aa).

Positions 6 and 51 each coordinate Mg(2+).

It belongs to the P-Pant transferase superfamily. AcpS family. The cofactor is Mg(2+).

The protein localises to the cytoplasm. The catalysed reaction is apo-[ACP] + CoA = holo-[ACP] + adenosine 3',5'-bisphosphate + H(+). In terms of biological role, transfers the 4'-phosphopantetheine moiety from coenzyme A to a Ser of acyl-carrier-protein. This is Holo-[acyl-carrier-protein] synthase from Campylobacter jejuni subsp. jejuni serotype O:23/36 (strain 81-176).